The sequence spans 1374 residues: Serine/threonine-protein kinase LMTK1 (1374 aa).

The chain crosses the membrane as a helical span at residues 32 to 52 (LAVVAVSFSGLFAVIVLMLAC). Positions 125-395 (LLYLKEIGRG…PTAEEVHLLL (271 aa)) constitute a Protein kinase domain. ATP contacts are provided by residues 131 to 139 (IGRGWFGKV) and lysine 156. Residue aspartate 253 is the Proton acceptor of the active site. Serine 495 is subject to Phosphoserine. Disordered regions lie at residues 542 to 622 (GHDP…LAEG), 667 to 731 (VGAR…LLGL), 765 to 1195 (WTET…PAVP), 1245 to 1302 (QESP…AWDD), and 1320 to 1374 (AAPA…SKEA). Residues 606 to 620 (PSRSPSPSAGPLSLA) are compositionally biased toward low complexity. A compositionally biased stretch (polar residues) spans 680–690 (SNVSANNNSGS). 3 stretches are compositionally biased toward low complexity: residues 719–731 (PEPG…LLGL), 801–831 (SPSQ…TPAT), and 847–856 (SSSSPEVEAP). Residues 865–878 (EATSGIFTDTSSDG) are compositionally biased toward polar residues. The span at 900–914 (PDSLDSLDIPSSASD) shows a compositional bias: low complexity. A compositionally biased stretch (polar residues) spans 978–987 (RLSTSLSGLN). Position 1029 is a phosphoserine (serine 1029). Polar residues predominate over residues 1063-1073 (EGSSPEPSTCP). The segment covering 1138–1155 (TPRAPLRLALPGLPAALE) has biased composition (low complexity). Over residues 1158–1173 (PEEEEEDSEDSDESDE) the composition is skewed to acidic residues. Phosphoserine occurs at positions 1168, 1171, 1184, 1187, and 1262. The segment covering 1272 to 1291 (GSPSAPNRPQQADGSPNGST) has biased composition (polar residues). Over residues 1321 to 1332 (APAPAAPTPTPA) the composition is skewed to pro residues. Polar residues predominate over residues 1337-1352 (FTVSPAPTSRFSITHV). Residues 1353–1363 (SDSDAESKRGP) show a composition bias toward basic and acidic residues. Gly residues predominate over residues 1365–1374 (AGAGGESKEA).

This sequence belongs to the protein kinase superfamily. Tyr protein kinase family. In terms of assembly, interacts with CDK5. In terms of processing, autophosphorylated. Phosphorylated by CDK5. In terms of tissue distribution, expressed in brain.

It localises to the membrane. The protein localises to the cytoplasm. It is found in the perinuclear region. The catalysed reaction is L-seryl-[protein] + ATP = O-phospho-L-seryl-[protein] + ADP + H(+). It catalyses the reaction L-threonyl-[protein] + ATP = O-phospho-L-threonyl-[protein] + ADP + H(+). Its function is as follows. May be involved in neuronal differentiation. The protein is Serine/threonine-protein kinase LMTK1 (AATK) of Homo sapiens (Human).